A 1209-amino-acid chain; its full sequence is Calcium-activated potassium channel subunit alpha-1 (1209 aa).

Positions 1–26 are enriched in gly residues; that stretch reads MANGGGGGGGGSSGSSGGGGGGGGGE. Disordered regions lie at residues 1-29 and 42-64; these read MANGGGGGGGGSSGSSGGGGGGGGGETAL and LDASSSSSSSSSSSSSSSSSVHE. At 1–87 the chain is on the extracellular side; it reads MANGGGGGGG…VPCDSRGQRM (87 aa). Residues 45 to 61 are compositionally biased toward low complexity; sequence SSSSSSSSSSSSSSSSS. A helical membrane pass occupies residues 88–108; that stretch reads WWAFLASSMVTFFGGLFIILL. The Cytoplasmic segment spans residues 109–179; it reads WRTLKYLWTV…MISAQTLTGR (71 aa). S-palmitoyl cysteine attachment occurs at residues C119, C120, and C122. The helical transmembrane segment at 180-200 threads the bilayer; it reads VLVVLVFALSIGALVIYFIDS. Residues 201–215 lie on the Extracellular side of the membrane; it reads SNPIESCQNFYKDFT. A helical membrane pass occupies residues 216-236; it reads LQIDMAFNVFFLLYFGLRFIA. At 237–240 the chain is on the cytoplasmic side; the sequence is ANDK. Residues 241-261 traverse the membrane as a helical segment; that stretch reads LWFWLEVNSVVDFFTVPPVFV. The Extracellular segment spans residues 262-265; sequence SVYL. A helical; Voltage-sensor membrane pass occupies residues 266–286; sequence NRSWLGLRFLRALRLIQFSEI. Over 287–301 the chain is Cytoplasmic; the sequence is LQFLNILKTSNSIKL. Residues 302 to 322 form a helical membrane-spanning segment; it reads VNLLSIFISTWLTAAGFIHLV. Residues 323–336 lie on the Extracellular side of the membrane; it reads ENSGDPWENFQNNQ. Residues 337 to 359 constitute an intramembrane region (pore-forming); the sequence is ALTYWECVYLLMVTMSTVGYGDV. Residues 353-356 carry the Selectivity for potassium motif; sequence TVGY. Topologically, residues 360–368 are extracellular; the sequence is YAKTTLGRL. Residues 369-389 traverse the membrane as a helical segment; sequence FMVFFILGGLAMFASYVPEII. The Cytoplasmic portion of the chain corresponds to 390-1209; the sequence is ELIGNRKKYG…DKQKKEMVYR (820 aa). In terms of domain architecture, RCK N-terminal 1 spans 408–550; it reads RKHIVVCGHI…WNWKEGDDAI (143 aa). 3 residues coordinate Mg(2+): E440, Q463, and E465. The tract at residues 557-577 is segment S7; the sequence is LGFIAQSCLAQGLSTMLANLF. Positions 614-634 are segment S8; that stretch reads LSFPTVCELCFVKLKLLMIAI. Positions 682–686 are heme-binding motif; that stretch reads CKACH. Residues 704 to 734 form a disordered region; sequence EDEQPPTLSPKKKQRNGGMRNSPNTSPKLMR. T710 is modified (phosphothreonine). 3 positions are modified to phosphoserine: S712, S725, and S729. Residues 784–804 form a segment S9 region; the sequence is VLSGHVVVCIFGDVSSALIGL. The RCK N-terminal 2 domain maps to 786 to 930; the sequence is SGHVVVCIFG…MDRSSPDNSP (145 aa). T917 is modified (phosphothreonine). Phosphoserine occurs at positions 925 and 929. The Calcium bowl signature appears at 977–999; that stretch reads TELVNDTNVQFLDQDDDDDPDTE. Ca(2+)-binding residues include Q986, D989, D992, and D994. A segment S10 region spans residues 1006–1026; the sequence is FACGTAFAVSVLDSLMSATYF. Low complexity predominate over residues 1160–1185; the sequence is RASLSHSSHSSQSSSKKSSSVHSIPS. The tract at residues 1160 to 1209 is disordered; it reads RASLSHSSHSSQSSSKKSSSVHSIPSTANRPNRPKSRESRDKQKKEMVYR. Residues 1194–1209 are compositionally biased toward basic and acidic residues; it reads KSRESRDKQKKEMVYR. Residues S1195 and S1198 each carry the phosphoserine modification.

This sequence belongs to the potassium channel family. Calcium-activated (TC 1.A.1.3) subfamily. KCa1.1/KCNMA1 sub-subfamily. As to quaternary structure, homotetramer; which constitutes the calcium-activated potassium channel. Interacts with beta subunits KCNMB1, KCNMB2, KCNMB3 and KCNMB4. Interacts with gamma subunits LRRC26, LRRC38, LRRC52 and LRRC55. Beta and gamma subunits are accessory, and modulate its activity. Interacts with RAB11B. Post-translationally, phosphorylated. Phosphorylation by kinases such as PKA and/or PKG. In smooth muscles, phosphorylation affects its activity. Palmitoylation by ZDHHC22 and ZDHHC23 within the intracellular linker between the S0 and S1 transmembrane domains regulates localization to the plasma membrane. Depalmitoylated by LYPLA1 and LYPLAL1, leading to retard exit from the trans-Golgi network.

The protein resides in the cell membrane. It is found in the endoplasmic reticulum membrane. It catalyses the reaction K(+)(in) = K(+)(out). Ethanol and carbon monoxide-bound heme increase channel activation. Its activity is regulated as follows. Heme inhibits channel activation. Its function is as follows. Potassium channel activated by both membrane depolarization or increase in cytosolic Ca(2+) that mediates export of K(+). It is also activated by the concentration of cytosolic Mg(2+). Its activation dampens the excitatory events that elevate the cytosolic Ca(2+) concentration and/or depolarize the cell membrane. It therefore contributes to repolarization of the membrane potential. Plays a key role in controlling excitability in a number of systems, such as regulation of the contraction of smooth muscle, the tuning of hair cells in the cochlea, regulation of transmitter release, and innate immunity. In smooth muscles, its activation by high level of Ca(2+), caused by ryanodine receptors in the sarcoplasmic reticulum, regulates the membrane potential. In cochlea cells, its number and kinetic properties partly determine the characteristic frequency of each hair cell and thereby helps to establish a tonotopic map. Kinetics of KCNMA1 channels are determined by alternative splicing, phosphorylation status and its combination with modulating beta subunits. Highly sensitive to both iberiotoxin (IbTx) and charybdotoxin (CTX). In terms of biological role, potassium channel activated by both membrane depolarization or increase in cytosolic Ca(2+) that mediates export of K(+). This is Calcium-activated potassium channel subunit alpha-1 (Kcnma1) from Rattus norvegicus (Rat).